Reading from the N-terminus, the 224-residue chain is Peroxiredoxin-like 2A (224 aa).

The interval 14–112 (MWSVGLGAVG…SKLGVPLYAV (99 aa)) is thioredoxin fold. Position 85 (Sec85) is a non-standard amino acid, selenocysteine. Catalysis depends on Cys88, which acts as the Redox-active.

It belongs to the peroxiredoxin-like PRXL2 family. PRXL2A subfamily.

Its subcellular location is the cytoplasm. In terms of biological role, involved in redox regulation of the cell. Acts as an antioxidant. Inhibits TNFSF11-induced NFKB1 and JUN activation and osteoclast differentiation. May affect bone resorption and help to maintain bone mass. The protein is Peroxiredoxin-like 2A (PRXL2A) of Gallus gallus (Chicken).